Here is a 118-residue protein sequence, read N- to C-terminus: MKNKYIEQFEAKQIEGKNVPDFRAGDTLKLAIRIKEGDKTRIQNFEGICIARRGNGVSETFIVRKMGANNVGVERIFPIYSESLESIAVLRRGRVRRARLFYLRDRRGKAARIKELKK.

This sequence belongs to the bacterial ribosomal protein bL19 family.

Functionally, this protein is located at the 30S-50S ribosomal subunit interface and may play a role in the structure and function of the aminoacyl-tRNA binding site. This is Large ribosomal subunit protein bL19 from Campylobacter jejuni subsp. doylei (strain ATCC BAA-1458 / RM4099 / 269.97).